Here is a 773-residue protein sequence, read N- to C-terminus: Probable serine/threonine-protein kinase MARK-C (773 aa).

Residues 1 to 27 (MESNKSSSHGDVSTSPSFLNNHHQFNN) show a composition bias toward polar residues. Residues 1–32 (MESNKSSSHGDVSTSPSFLNNHHQFNNGGDII) are disordered. The Protein kinase domain maps to 46–300 (YEVGKTLGNG…IQELKNHPWT (255 aa)). ATP is bound by residues 52–60 (LGNGTFGKV) and lysine 75. The active-site Proton acceptor is the aspartate 171. A coiled-coil region spans residues 362-390 (RYASKEVENLKSKLELLSKRKKSFSDKRN). Disordered regions lie at residues 382–445 (KKSF…SQGS), 462–487 (DNDIENSDNNKSSSLTRRSSDPNKDI), and 558–588 (YSIQQQQLQQQQQQQQEQHKEDNNKPNTNLR). Residues 405–443 (DLSSNNNNNQQQQNSPPSKTNSSSTSSSNRESNNNSPSQ) show a composition bias toward low complexity. A coiled-coil region spans residues 445 to 474 (SIKEISLDELDNHIEQLDNDIENSDNNKSS). Residues 468–478 (SDNNKSSSLTR) show a composition bias toward polar residues. Positions 561 to 573 (QQQQLQQQQQQQQ) are enriched in low complexity. Residues 724–773 (CFDEDNSVKFQIEIVKICNLDLTGIQLKRLSGDTWKYKDICTELVESMKL) form the KA1 domain.

Belongs to the protein kinase superfamily. CAMK Ser/Thr protein kinase family. SNF1 subfamily.

It carries out the reaction L-seryl-[protein] + ATP = O-phospho-L-seryl-[protein] + ADP + H(+). It catalyses the reaction L-threonyl-[protein] + ATP = O-phospho-L-threonyl-[protein] + ADP + H(+). This Dictyostelium discoideum (Social amoeba) protein is Probable serine/threonine-protein kinase MARK-C (mrkC).